We begin with the raw amino-acid sequence, 420 residues long: C-methyltransferase NovU (420 aa).

The protein belongs to the methyltransferase superfamily.

The protein operates within antibiotic biosynthesis; novobiocin biosynthesis. C-methyltransferase that acts together with NovW to catalyze the formation of dTDP-4-keto-6-deoxy-5-C-methyl-L-lyxo-hexose from dTDP-4-keto-6-deoxy-D-glucose in the novobiocin biosynthesis pathway, an aminocoumarin family antibiotic that targets bacterial DNA gyrases. This Streptomyces niveus (Streptomyces spheroides) protein is C-methyltransferase NovU (novU).